The primary structure comprises 130 residues: MNSKIIEAFFIVALFTTSCLAQAPAPSPTTTVTPPPVATPPPAATPAPTTTPPPAVSPAPTSSPPSSAPSPSSDAPTASPPAPEGPGVSPGELAPTPSDASAPPPNAALTNKAFVVGSLVAAIIYAVVLA.

Positions 1–21 (MNSKIIEAFFIVALFTTSCLA) are cleaved as a signal peptide. At Gln-22 the chain carries Pyrrolidone carboxylic acid. Residues 22–108 (QAPAPSPTTT…DASAPPPNAA (87 aa)) form a disordered region. Residues Pro-24, Pro-26, Pro-28, Pro-35, and Pro-36 each carry the 4-hydroxyproline modification. Residues Pro-24, Pro-26, Pro-28, Pro-35, and Pro-36 are each glycosylated (O-linked (Ara...) hydroxyproline). A compositionally biased stretch (pro residues) spans 33–68 (TPPPVATPPPAATPAPTTTPPPAVSPAPTSSPPSSA). A lipid anchor (GPI-anchor amidated asparagine) is attached at Asn-106. A propeptide spans 107–130 (AALTNKAFVVGSLVAAIIYAVVLA) (removed in mature form).

This sequence belongs to the classical AGP family. O-glycosylated on hydroxyprolines; noncontiguous hydroxylproline residues are glycosylated with arabinogalactan.

It localises to the cell membrane. In terms of biological role, proteoglycan that seems to be implicated in diverse developmental roles such as differentiation, cell-cell recognition, embryogenesis and programmed cell death. This is Classical arabinogalactan protein 7 (AGP7) from Arabidopsis thaliana (Mouse-ear cress).